A 107-amino-acid chain; its full sequence is Large ribosomal subunit protein uL24 (107 aa).

This sequence belongs to the universal ribosomal protein uL24 family. As to quaternary structure, part of the 50S ribosomal subunit.

Its function is as follows. One of two assembly initiator proteins, it binds directly to the 5'-end of the 23S rRNA, where it nucleates assembly of the 50S subunit. Functionally, one of the proteins that surrounds the polypeptide exit tunnel on the outside of the subunit. The protein is Large ribosomal subunit protein uL24 of Streptomyces avermitilis (strain ATCC 31267 / DSM 46492 / JCM 5070 / NBRC 14893 / NCIMB 12804 / NRRL 8165 / MA-4680).